We begin with the raw amino-acid sequence, 95 residues long: Protein TusB (95 aa).

It belongs to the DsrH/TusB family. As to quaternary structure, heterohexamer, formed by a dimer of trimers. The hexameric TusBCD complex contains 2 copies each of TusB, TusC and TusD. The TusBCD complex interacts with TusE.

It localises to the cytoplasm. Part of a sulfur-relay system required for 2-thiolation of 5-methylaminomethyl-2-thiouridine (mnm(5)s(2)U) at tRNA wobble positions. This is Protein TusB from Escherichia coli O81 (strain ED1a).